We begin with the raw amino-acid sequence, 163 residues long: C-type lectin lectoxin-Lio1 (163 aa).

The N-terminal stretch at 1 to 21 is a signal peptide; sequence MERFIFAALLVVALSLSGTGA. 3 disulfide bridges follow: C25/C36, C53/C152, and C127/C144. The region spanning 32–153 is the C-type lectin domain; it reads SDGYCYKVFK…CRSKRYFICK (122 aa). The Mannose-binding motif lies at 117 to 119; the sequence is EPN. E125 and D141 together coordinate Ca(2+).

It belongs to the true venom lectin family. As to expression, expressed by the venom gland.

The protein localises to the secreted. Functionally, mannose-binding lectin which recognizes specific carbohydrate structures and agglutinates a variety of animal cells by binding to cell-surface glycoproteins and glycolipids. May be a calcium-dependent lectin. This chain is C-type lectin lectoxin-Lio1, found in Erythrolamprus poecilogyrus (Water snake).